Consider the following 559-residue polypeptide: Glucose-6-phosphate isomerase (559 aa).

Catalysis depends on Glu352, which acts as the Proton donor. Active-site residues include His383 and Lys511.

Belongs to the GPI family.

Its subcellular location is the cytoplasm. The enzyme catalyses alpha-D-glucose 6-phosphate = beta-D-fructose 6-phosphate. The protein operates within carbohydrate biosynthesis; gluconeogenesis. It functions in the pathway carbohydrate degradation; glycolysis; D-glyceraldehyde 3-phosphate and glycerone phosphate from D-glucose: step 2/4. Its function is as follows. Catalyzes the reversible isomerization of glucose-6-phosphate to fructose-6-phosphate. The polypeptide is Glucose-6-phosphate isomerase (Chlorobaculum tepidum (strain ATCC 49652 / DSM 12025 / NBRC 103806 / TLS) (Chlorobium tepidum)).